A 333-amino-acid polypeptide reads, in one-letter code: MLKMLKNLPLPKNITWRSVWMRGTSVVIIFVLAFTLVFTPTFEAEARRSGGRIGGGSFRAPSAPSRSYSGPSGGSYRSGGTYGGGGFGFPFIIPFFGFGGGFGGIFGILVMIAIANVVINAIRNGGGSSGEGGGGLAASSDPQVGIAQIQVGLLASAKELKKELDELALSADTGTANGRSLVLQEATLALLRHPEYWVYGSSQSDKVRLSAAEAAFNQLALTERSKFTDETLSNFNNQLRQGGRATAIGGDSPDAVPDGAGEYILVTIIAAALGNLNLPAVNDSSQLKQSLQTLGGISSDRLLAIEVLWTPQEEGDTLTSNDIISEYPELRLV.

Residues 26–46 (VVIIFVLAFTLVFTPTFEAEA) form a helical membrane-spanning segment. Residues 53-74 (IGGGSFRAPSAPSRSYSGPSGG) form a disordered region. The span at 58 to 70 (FRAPSAPSRSYSG) shows a compositional bias: low complexity. A run of 2 helical transmembrane segments spans residues 92-112 (IIPFFGFGGGFGGIFGILVMI) and 261-281 (GEYILVTIIAAALGNLNLPAV).

This sequence belongs to the FLAP family.

The protein resides in the cellular thylakoid membrane. The protein localises to the cell inner membrane. Its function is as follows. Essential for photosynthetic growth under fluctuating light by modulating PxcA- and PxcL-dependent intracellular pH regulation via proton transport (e.g. transient pH reduction upon transition from dark to light followed by an increase in the light until light-to-dark shift). In Synechocystis sp. (strain ATCC 27184 / PCC 6803 / Kazusa), this protein is Protein FLAP1 homolog A.